We begin with the raw amino-acid sequence, 318 residues long: N-succinylornithine carbamoyltransferase (318 aa).

Carbamoyl phosphate-binding positions include 47–50, Trp75, and Arg110; that span reads SLRT. Glu142 serves as a coordination point for N(2)-succinyl-L-ornithine. Position 147-150 (147-150) interacts with carbamoyl phosphate; that stretch reads HPLQ. His176 and Lys236 together coordinate N(2)-succinyl-L-ornithine. Residue 274–275 participates in carbamoyl phosphate binding; it reads CL. N(2)-succinyl-L-ornithine is bound at residue Arg278. Residue Arg302 coordinates carbamoyl phosphate.

This sequence belongs to the aspartate/ornithine carbamoyltransferase superfamily. SOTCase family. In terms of assembly, homotrimer.

It carries out the reaction N(2)-succinyl-L-ornithine + carbamoyl phosphate = N(2)-succinyl-L-citrulline + phosphate + H(+). It functions in the pathway amino-acid biosynthesis; L-arginine biosynthesis. Functionally, catalyzes the transfer of the carbamoyl group from carbamoyl phosphate to the delta-amino group of N(2)-succinyl-L-ornithine to produce N(2)-succinyl-L-citrulline. Is essential for arginine biosynthesis. Has no activity with either L-ornithine or L-aspartate as substrate. Also has no detectable AOTCase activity, being unable to convert N(2)-acetyl-L-ornithine to N(2)-acetyl-L-citrulline. The polypeptide is N-succinylornithine carbamoyltransferase (Bacteroides fragilis (strain 638R)).